The chain runs to 112 residues: Nitrogen regulatory protein GlnK1 (112 aa).

Thr-29 contacts ADP. Thr-29 and Val-38 together coordinate ATP. 52-54 (IVD) provides a ligand contact to 2-oxoglutarate. ADP contacts are provided by residues Val-64, 88–90 (DGK), and 101–103 (RVR). Residues Val-64, 86-90 (PGDGK), and 101-103 (RVR) contribute to the ATP site.

This sequence belongs to the P(II) protein family. As to quaternary structure, homotrimer. Interacts and forms a complex with Amt1.

The protein localises to the cytoplasm. With respect to regulation, formation of the GlnK1/Amt1 complex is decreased in the presence of Mg-ATP or 2-oxoglutarate. The presence of both effectors abolishes the formation of the complex. Functionally, involved in the regulation of nitrogen metabolism. Regulates the activity of its targets by protein-protein interaction in response to the nitrogen status of the cell. Regulates the activity of the ammonia channel Amt1 via direct interaction. The sequence is that of Nitrogen regulatory protein GlnK1 from Methanocaldococcus jannaschii (strain ATCC 43067 / DSM 2661 / JAL-1 / JCM 10045 / NBRC 100440) (Methanococcus jannaschii).